The following is a 129-amino-acid chain: Chromatin accessibility complex protein 1 (129 aa).

The residue at position 2 (Ala2) is an N-acetylalanine. Lys102 carries the N6-acetyllysine modification. Residues 104-120 adopt a coiled-coil conformation; sequence LKMLKEKREEEEDNEDD. The tract at residues 109–129 is disordered; it reads EKREEEEDNEDDGSDLGEALA. A compositionally biased stretch (acidic residues) spans 112 to 123; sequence EEEEDNEDDGSD. Residue Ser122 is modified to Phosphoserine.

In terms of assembly, heterodimer with POLE3; binds to DNA. Component of the CHRAC ISWI chromatin remodeling complex at least composed of SMARCA5/SNF2H, BAZ1A/ACF1, CHRAC1 and POLE3; the complex preferentially binds DNA through the CHRAC1-POLE3 heterodimer and possesses ATP-dependent nucleosome-remodeling activity. Within the complex, the heterodimer with POLE3 interacts with SMARCA5/SNF2H; the interaction is direct and enhances nucleosome sliding activity by the SMARCA5/SNF2H and BAZ1A/ACF1 interaction. Within the complex, the heterodimer with POLE3 interacts with BAZ1A/ACF1; the interactions are direct. In terms of tissue distribution, ubiquitously expressed.

The protein localises to the nucleus. Functionally, forms a complex with DNA polymerase epsilon subunit POLE3 and binds naked DNA, which is then incorporated into chromatin, aided by the nucleosome remodeling activity of ISWI/SNF2H and ACF1. Does not enhance nucleosome sliding activity of the ACF-5 ISWI chromatin remodeling complex. This Mus musculus (Mouse) protein is Chromatin accessibility complex protein 1 (Chrac1).